The sequence spans 81 residues: U10-myrmicitoxin-Mri1b (81 aa).

An N-terminal signal peptide occupies residues 1 to 26 (MRLSYISLTLAIIFVMAIVHAPETEA). The propeptide occupies 27–52 (KAYPEADAVAEAIAVGEADAVGVADP). Val80 carries the valine amide modification.

The protein belongs to the formicidae venom precursor-01 superfamily. In terms of tissue distribution, expressed by the venom gland.

It localises to the secreted. Induces paralysis after injection into blowflies (L.caesar), and then death within 24 hours. May have antimicrobial properties, like most ant linear peptides. The protein is U10-myrmicitoxin-Mri1b of Manica rubida (European giant red ant).